An 85-amino-acid polypeptide reads, in one-letter code: Large ribosomal subunit protein bL27 (85 aa).

This sequence belongs to the bacterial ribosomal protein bL27 family.

The sequence is that of Large ribosomal subunit protein bL27 from Campylobacter fetus subsp. fetus (strain 82-40).